We begin with the raw amino-acid sequence, 474 residues long: MAPAALWVALVVELQLWATGHTVPAKVVLTPYKPEPGNQCQISQEYYDKKAQMCCAKCPPGQYAKHFCNKTSDTVCADCAAGMFTQVWNHLHTCLSCSSSCSDDQVETHNCTKKQNRVCACNADSYCALKLHSGNCRQCMKLSKCGPGFGVARSRTSNGNVICSACAPGTFSDTTSSTDVCRPHRICSILAIPGNASTDAVCASESPTPSAVPRTIYVSQPEPTRSQPMDQEPGPSQTPHIPVSLGSTPIIEPSITGGISLPIGLIVGLTTLGLLMLGLANCFILVQRKKKPSCLQRETMVPHLPDDKSQDAIGLEQQHLLTTAPSSSSSSLESSASAGDRRAPPGGHPQARVTAEAQGSQEACAGSRSSDSSHGSHGTHVNVTCIVNVCSSSDHSSQCSSQASTTVGDPDANPSGSPKDEQVPFSQEECPSQSQWETTETLQNHDKPFPLGVPDVGMKPNQPGWYDQIAVKVP.

A signal peptide spans 1–22; sequence MAPAALWVALVVELQLWATGHT. Topologically, residues 23–258 are extracellular; the sequence is VPAKVVLTPY…PIIEPSITGG (236 aa). Thr30 carries an O-linked (GalNAc...) threonine glycan. TNFR-Cys repeat units lie at residues 39-77, 78-119, 120-164, and 165-203; these read QCQISQEYYDKKAQMCCAKCPPGQYAKHFCNKTSDTVCA, DCAA…NRVC, ACNA…VICS, and ACAPGTFSDTTSSTDVCRPHRICSILAIPGNASTDAVCA. Disulfide bonds link Cys40-Cys54, Cys55-Cys68, Cys58-Cys76, Cys79-Cys94, Cys97-Cys111, Cys101-Cys119, Cys121-Cys127, Cys136-Cys145, Cys139-Cys163, and Cys166-Cys181. Asn69 is a glycosylation site (N-linked (GlcNAc...) asparagine). Residue Asn110 is glycosylated (N-linked (GlcNAc...) asparagine). The N-linked (GlcNAc...) asparagine glycan is linked to Asn195. Residues Thr208 and Thr224 are each glycosylated (O-linked (GalNAc...) threonine). The span at 220–239 shows a compositional bias: polar residues; it reads QPEPTRSQPMDQEPGPSQTP. The disordered stretch occupies residues 220 to 241; that stretch reads QPEPTRSQPMDQEPGPSQTPHI. The helical transmembrane segment at 259–288 threads the bilayer; sequence ISLPIGLIVGLTTLGLLMLGLANCFILVQR. Residues 289-474 lie on the Cytoplasmic side of the membrane; sequence KKKPSCLQRE…WYDQIAVKVP (186 aa). Disordered regions lie at residues 321 to 378 and 397 to 464; these read LTTA…GSHG and SQCS…NQPG. 2 stretches are compositionally biased toward low complexity: residues 324–338 and 366–378; these read APSSSSSSLESSASA and GSRSSDSSHGSHG. Ser331 carries the post-translational modification Phosphoserine. The span at 429 to 442 shows a compositional bias: polar residues; the sequence is ECPSQSQWETTETL.

In terms of assembly, binds to TRAF2. Interacts with BMX. Interacts (activated form) with XPNPEP3.

Its subcellular location is the membrane. Receptor with high affinity for TNFSF2/TNF-alpha and approximately 5-fold lower affinity for homotrimeric TNFSF1/lymphotoxin-alpha. The TRAF1/TRAF2 complex recruits the apoptotic suppressors BIRC2 and BIRC3 to TNFRSF1B/TNFR2. The sequence is that of Tumor necrosis factor receptor superfamily member 1B (Tnfrsf1b) from Rattus norvegicus (Rat).